Consider the following 347-residue polypeptide: NADH-ubiquinone oxidoreductase chain 2 (347 aa).

The next 10 membrane-spanning stretches (helical) occupy residues 1-21 (MNPLVFTVIMSTVMLGTAIVA), 25-45 (HWLMAWIGFEMNMLAVIPILM), 59-79 (YFLTQATASMLLMLAVTMNLV), 111-131 (FHFWVPEVAQGISLPSGLILL), 149-169 (INLDLLMTLSILSIGIGGWGG), 178-198 (IMAYSSIAHMGWMTTILAYNP), 201-221 (TLLNLAIYILLTTTTFMMFML), 237-257 (MPLLTTAILLTMLSLGGLPPL), 276-296 (VILPTMMAVMALLNLYFYMRL), and 326-346 (LSPLIILSTLILPLSPMLALL).

The protein belongs to the complex I subunit 2 family. As to quaternary structure, core subunit of respiratory chain NADH dehydrogenase (Complex I) which is composed of 45 different subunits. Interacts with TMEM242.

It localises to the mitochondrion inner membrane. The catalysed reaction is a ubiquinone + NADH + 5 H(+)(in) = a ubiquinol + NAD(+) + 4 H(+)(out). Functionally, core subunit of the mitochondrial membrane respiratory chain NADH dehydrogenase (Complex I) which catalyzes electron transfer from NADH through the respiratory chain, using ubiquinone as an electron acceptor. Essential for the catalytic activity and assembly of complex I. The polypeptide is NADH-ubiquinone oxidoreductase chain 2 (Pteropus pumilus (Little golden-mantled flying fox)).